We begin with the raw amino-acid sequence, 387 residues long: Anhydro-N-acetylmuramic acid kinase (387 aa).

17 to 24 (GTSMDGVD) contacts ATP.

This sequence belongs to the anhydro-N-acetylmuramic acid kinase family.

The enzyme catalyses 1,6-anhydro-N-acetyl-beta-muramate + ATP + H2O = N-acetyl-D-muramate 6-phosphate + ADP + H(+). Its pathway is amino-sugar metabolism; 1,6-anhydro-N-acetylmuramate degradation. It participates in cell wall biogenesis; peptidoglycan recycling. Functionally, catalyzes the specific phosphorylation of 1,6-anhydro-N-acetylmuramic acid (anhMurNAc) with the simultaneous cleavage of the 1,6-anhydro ring, generating MurNAc-6-P. Is required for the utilization of anhMurNAc either imported from the medium or derived from its own cell wall murein, and thus plays a role in cell wall recycling. The polypeptide is Anhydro-N-acetylmuramic acid kinase (Burkholderia pseudomallei (strain 1710b)).